Here is a 648-residue protein sequence, read N- to C-terminus: MKYLYATQHLTLNAIKHAKGGHVGMAIGASPILFSLFTKHFHFDPDQPKWINRDRFVLSAGHGSMALYSIFHFAGLISKQEILQHKHGQINTSSHPEYAPNNFIDASTGPLGQGFGMAVGMVLAQKLLANEFKELSDKLFDHYTYVVVGDGDLQEGVSYEVSQIAGLYKLNKLIVLHDSNRVQMDSEVKKVANENLKVRFENVGWNYIHTDDQLENIDQAIIKAKQSDKPTFIEVRTTIAKNTHLEDQYGGHWFIPNEVDFQLFEKRTNTNFNFFNYPDSIYHWFKQTVIERQKQIKEDYNNLLISLKDKPLFKKFTNWIDSDFQALYLNQLDEKKVAKKDSATRNYLKDFLNQINNPNSNLYCLNADVSRSCFIKIGDDNLHENPCSRNIQIGIREFAMATIMNGMALHGGIKVMGGTFLAFADYSKPAIRLGALMNLPVFYVYTHDSYQVGGDGPTHQPYDQLPMLRAIENVCVFRPCDEKETCAGFNYGLLSQDQTTVLVLTRQPLKSIDNTDSLKTLKGGYILLDRKQPDLIIAASGSEVQLAIEFEKVLTKQNVKVRILSVPNITLLLKQDEKYLKSLFDANSSLITIEASSSYEWFCFKKYVKNHAHLGAFSFGESDDGDKVYQQKGFNLERLMKIFTSLRN.

A substrate-binding site is contributed by His22. Thiamine diphosphate is bound by residues His62 and 109 to 111; that span reads GPL. A Mg(2+)-binding site is contributed by Asp150. Residues Gly151 and Asn180 each coordinate thiamine diphosphate. 2 residues coordinate Mg(2+): Asn180 and Val182. Positions 252, 345, and 372 each coordinate substrate. His252 lines the thiamine diphosphate pocket. Glu397 (proton donor) is an active-site residue. Residue Phe423 coordinates thiamine diphosphate. His447, Asp455, and Arg506 together coordinate substrate.

It belongs to the transketolase family. In terms of assembly, homodimer. It depends on Mg(2+) as a cofactor. Requires Ca(2+) as cofactor. The cofactor is Mn(2+). Co(2+) serves as cofactor. Thiamine diphosphate is required as a cofactor.

The enzyme catalyses D-sedoheptulose 7-phosphate + D-glyceraldehyde 3-phosphate = aldehydo-D-ribose 5-phosphate + D-xylulose 5-phosphate. In terms of biological role, catalyzes the transfer of a two-carbon ketol group from a ketose donor to an aldose acceptor, via a covalent intermediate with the cofactor thiamine pyrophosphate. This is Transketolase (tkt) from Mycoplasma genitalium (strain ATCC 33530 / DSM 19775 / NCTC 10195 / G37) (Mycoplasmoides genitalium).